The chain runs to 479 residues: Xylose isomerase (479 aa).

Residue H144 is part of the active site. Residues E275, E311, H314, D339, D350, D352, and Y382 each coordinate Mn(2+).

The protein belongs to the xylose isomerase family. As to quaternary structure, homodimer. Mn(2+) serves as cofactor.

The enzyme catalyses alpha-D-xylose = alpha-D-xylulofuranose. The polypeptide is Xylose isomerase (XYLA) (Hordeum vulgare (Barley)).